A 489-amino-acid polypeptide reads, in one-letter code: Protein P7 (489 aa).

2 RNA-binding regions span residues 129–251 (TSLI…GRML) and 321–351 (AGDY…FQVN).

It belongs to the phytoreovirus protein P7 family.

It is found in the virion. It localises to the host cytoplasm. Probable component of the transcriptional machinery present in the inner capsid. Displays dsRNA binding activity and may play an important role in the sorting of viral RNA and virion assembly. Together with the RNA-directed RNA polymerase P1 and capping enzyme P5, forms an transcriptional complex positioned near the channels situated at each of the five-fold vertices of the core. The polypeptide is Protein P7 (Rice gall dwarf virus (RGDV)).